Consider the following 348-residue polypeptide: Ion-translocating oxidoreductase complex subunit D (348 aa).

A run of 5 helical transmembrane segments spans residues 19–39 (FMLWVIVAMLPALIVQIAFFG), 41–61 (GVVIQLAIALSMAIVIEIVVA), 66–86 (KSTTFYLADLAGVVTATILAM), 87–107 (AIPPYAPYWVVMIGMIVALLL), and 122–142 (PAMVAYAFLLISFPVQMTSWL). Residue threonine 186 is modified to FMN phosphoryl threonine. A run of 5 helical transmembrane segments spans residues 212-232 (IFARGWLQLNLAFLAGGLFLL), 236-256 (IIHWQIPVAMLVVFSVLSALT), 265-285 (LNVLSQLFSGAMMFGAFFIAT), 291-311 (SITPKGKLIFGGLIGLLAYLI), and 315-335 (GSYPDAIAFAVLLANLCVPLI).

It belongs to the NqrB/RnfD family. As to quaternary structure, the complex is composed of six subunits: RnfA, RnfB, RnfC, RnfD, RnfE and RnfG. FMN is required as a cofactor.

It is found in the cell inner membrane. Functionally, part of a membrane-bound complex that couples electron transfer with translocation of ions across the membrane. In Haemophilus ducreyi (strain 35000HP / ATCC 700724), this protein is Ion-translocating oxidoreductase complex subunit D.